Consider the following 6631-residue polypeptide: Replicase polyprotein 1ab (6631 aa).

The Cytoplasmic portion of the chain corresponds to 1–1752; that stretch reads MASSLKQGVS…VSSYKIVLCK (1752 aa). Ubiquitin-like domains are found at residues 675 to 780 and 1177 to 1229; these read KTVT…RDYE and CKQK…ILFI. Residues 1005–1181 form the Macro domain; that stretch reads VKPATCEKPK…YFDATCKQKT (177 aa). A Peptidase C16 domain is found at 1238–1499; it reads EYYGLDAQKY…AKVVKEDVSN (262 aa). Cysteine 1276 serves as the catalytic For PL-PRO activity. Residues 1355 to 1392 form a C4-type; degenerate zinc finger; sequence CNCGVKSYELRGLEACIQPVRAPNLLHFKTQYSNCPTC. Active-site for PL-PRO activity residues include histidine 1439 and aspartate 1450. Residues 1753–1773 form a helical membrane-spanning segment; sequence VVFATLLIVWFIYTSNPVVFT. The tract at residues 1753–1866 is HD1; the sequence is VVFATLLIVW…KPVAGFVIIC (114 aa). The 65-residue stretch at 1771 to 1835 folds into the 3Ecto domain; that stretch reads VFTGIRVLDF…AYSVEQIYKD (65 aa). Residues 1774–1845 are Lumenal-facing; the sequence is GIRVLDFLFE…AASGINFNWN (72 aa). Intrachain disulfides connect cysteine 1787–cysteine 1813 and cysteine 1804–cysteine 1810. The helical transmembrane segment at 1846–1866 threads the bilayer; sequence WLYLVFLILFVKPVAGFVIIC. The Cytoplasmic portion of the chain corresponds to 1867-2282; it reads YCVKYLVLSS…TFKWFMSCFK (416 aa). The interval 1913–2003 is Y1; the sequence is YVQVHHILYC…KLKRHVKPTA (91 aa). One can recognise a CoV Nsp3 Y domain in the interval 1913–2265; it reads YVQVHHILYC…HTQKLLVEKK (353 aa). 8 residues coordinate Zn(2+): histidine 1917, cysteine 1922, cysteine 1927, cysteine 1930, cysteine 1963, histidine 1966, cysteine 1970, and cysteine 1973. A ZF1 region spans residues 1917-1930; the sequence is HHILYCKDVTCEVC. The tract at residues 1963 to 1973 is ZF2; sequence CKRHNWYCRNC. Residues 2004 to 2106 form a Y2 region; it reads YAYHVVYEAC…ILDQALYEQL (103 aa). Residues 2004–2265 form a coV-Y region; it reads YAYHVVYEAC…HTQKLLVEKK (262 aa). The interval 2107–2165 is Y3; sequence IVEPVSKSVIDKVCSILSNIISVDTAALNYKAGTLRDALLSITKDEEAVDMAIFCHNHE. Residues 2166 to 2265 are Y4; it reads VEYTGDGFTN…HTQKLLVEKK (100 aa). Residues 2283 to 2303 form a helical membrane-spanning segment; sequence WLFVFYILFTACCLGYYYMEM. Residues 2283–2666 form an HD2 region; sequence WLFVFYILFT…LACCYLGFIL (384 aa). Over 2304–2561 the chain is Lumenal; the sequence is NKSFVHPMYD…FFTGVNPNIY (258 aa). A helical transmembrane segment spans residues 2562 to 2582; the sequence is IQLATMFLILVVIVLIFAMVI. Residues 2583-2613 lie on the Cytoplasmic side of the membrane; that stretch reads KFQGVFKAYATIVFTIMLVWVINAFVLCVHS. A helical transmembrane segment spans residues 2614–2634; it reads YNSVLAVILLVLYCYASMVTS. Residues 2635–2645 lie on the Lumenal side of the membrane; that stretch reads RNTAIIMHCWL. Residues 2646–2666 traverse the membrane as a helical segment; sequence VFTFGLIVPTWLACCYLGFIL. Residues 2667–3098 are Cytoplasmic-facing; it reads YMYTPLVFWC…SSFVRKATSW (432 aa). The region spanning 2686-2781 is the Nsp4C domain; sequence LYDGNEFVGN…RYSIGVSRLQ (96 aa). The Peptidase C30 domain maps to 2782–3088; it reads AGFKKLVSPS…FNQVGGVRLQ (307 aa). Residues histidine 2822 and cysteine 2924 each act as for 3CL-PRO activity in the active site. The helical transmembrane segment at 3099–3119 threads the bilayer; sequence FWSRCVLACFLFVLCAIVLFT. Residues 3099–3319 form an HD3 region; sequence FWSRCVLACF…WLCTCYFGLY (221 aa). Over 3120 to 3123 the chain is Lumenal; sequence AVPL. Residues 3124–3144 form a helical membrane-spanning segment; sequence KFYVHAAVILLMAVLFISFTV. Topologically, residues 3145–3153 are cytoplasmic; the sequence is KHVMAYMDT. The chain crosses the membrane as a helical span at residues 3154-3174; it reads FLLPTLITVIIGVCAEVPFIY. At 3175 to 3190 the chain is on the lumenal side; the sequence is NTLISQVVIFLSQWYD. Residues 3191 to 3211 form a helical membrane-spanning segment; that stretch reads PVVFDTMVPWMLLPLVLYTAF. Over 3212–3259 the chain is Cytoplasmic; that stretch reads KCVQGCYMNSFNTSLLMLYQFMKLGFVIYTSSNTLTAYTEGNWELFFE. The helical transmembrane segment at 3260–3280 threads the bilayer; the sequence is LVHTIVLANVSSNSLIGLIVF. The Lumenal portion of the chain corresponds to 3281-3298; the sequence is KCAKWMLYYCNATYFNNY. The helical transmembrane segment at 3299–3319 threads the bilayer; sequence VLMAVMVNGIGWLCTCYFGLY. The Cytoplasmic segment spans residues 3320–6631; that stretch reads WWVNKVFGLT…FTSDSFVCTM (3312 aa). In terms of domain architecture, RdRp Nsp7 cofactor spans 3382–3464; it reads SKLSDVKCTT…DILKRSTVLQ (83 aa). The RdRp Nsp8 cofactor domain maps to 3465-3674; it reads SVTQEFSHIP…GHNKVDVALQ (210 aa). Positions 3675 to 3785 constitute a Nsp9 ssRNA-binding domain; it reads NNELMPHGVK…GAISNVVVLQ (111 aa). In terms of domain architecture, ExoN/MTase coactivator spans 3787 to 3928; the sequence is KGHETEEVDA…CDSLRQPKPS (142 aa). Residues cysteine 3860, cysteine 3863, histidine 3869, cysteine 3880, cysteine 3906, cysteine 3909, cysteine 3917, and cysteine 3919 each contribute to the Zn(2+) site. Zinc fingers lie at residues 3860–3880 and 3906–3919; these read CLYC…DGRC and CTVC…GCQC. Residues 3942 to 4200 enclose the NiRAN domain; sequence YLNRVRGSSE…APERYFEYDV (259 aa). A Nsp12 Interface domain is found at 4205-4303; the sequence is KSYDLLKYDY…MNQDNTMSFS (99 aa). Zn(2+) contacts are provided by histidine 4234, cysteine 4240, cysteine 4245, cysteine 4249, and cysteine 4426. The region spanning 4304–4870 is the Nsp12 RNA-dependent RNA polymerase domain; sequence KMGLSQLMQF…NMYRAPTTLQ (567 aa). The interval 4306–4519 is rdRp Fingers N-ter; sequence GLSQLMQFVG…HQKILKSIVN (214 aa). A rdRp Palm N-ter region spans residues 4520 to 4558; the sequence is TRNAPVVIGTTKFYGGWDNMLRNLIQGVEDPILMGWDYP. Positions 4550-4712 constitute a RdRp catalytic domain; sequence PILMGWDYPK…CYNNTLAKQG (163 aa). Residues 4559-4617 form a rdRp Fingers C-ter region; the sequence is KCDRAMPNLLRIAASLVLARKHTNCCTWSERVYRLYNECAQVLSETVLATGGIYVKPGG. 3 residues coordinate Zn(2+): histidine 4580, cysteine 4583, and cysteine 4584. Residues 4618 to 4753 form a rdRp Palm C-ter region; sequence TSSGDATTAY…EKGPHEFCSQ (136 aa). Residues serine 4697, aspartate 4698, and aspartate 4699 contribute to the active site. Residues 4754–4870 are rdRp Thumb; that stretch reads HTMLVEVDGE…NMYRAPTTLQ (117 aa). In terms of domain architecture, CV ZBD spans 4871-4983; sequence SCGVCVVCNS…DDFNQLATTN (113 aa). Zn(2+)-binding residues include cysteine 4875, cysteine 4878, cysteine 4886, cysteine 4889, cysteine 4896, cysteine 4899, histidine 4903, histidine 4909, cysteine 4920, cysteine 4925, cysteine 4942, and histidine 4945. Positions 5127 to 5307 constitute a (+)RNA virus helicase ATP-binding domain; the sequence is MVPACFVNNI…MVCVKPDIFL (181 aa). 5152–5159 contributes to the ATP binding site; that stretch reads GPPGSGKS. Residues 5308–5479 form the (+)RNA virus helicase C-terminal domain; sequence AKCYRCPKEI…QGTGLFKICN (172 aa). In terms of domain architecture, ExoN spans 5541–5755; that stretch reads MFITRDEAIR…RCLAINNAFC (215 aa). Residues aspartate 5559, glutamate 5561, and glutamate 5660 contribute to the active site. Residues cysteine 5676, cysteine 5678, cysteine 5694, histidine 5697, histidine 5725, cysteine 5729, and histidine 5732 each contribute to the Zn(2+) site. Active-site residues include histidine 5736 and aspartate 5741. Cysteine 5747 provides a ligand contact to Zn(2+). The N7-MTase domain maps to 5764–5991; sequence YPHIANEDEV…NLWKSFSALQ (228 aa). 5799 to 5805 is an S-adenosyl-L-methionine binding site; it reads DIGNPKG. Residues 5879-5893 form a gpppA-binding region; it reads CNGGSLYVNKHAFHT. The Zn(2+) site is built by cysteine 5917, cysteine 5937, cysteine 5948, and histidine 5951. The 61-residue stretch at 5992 to 6052 folds into the Nsp15 N-terminal oligomerization domain; that stretch reads SIDNIAYNMY…SVAFELYAKR (61 aa). The AV-Nsp11N/CoV-Nsp15M domain occupies 6053-6168; that stretch reads NIRTLPNNRI…VYKRVNGAFV (116 aa). Residues 6185 to 6326 enclose the NendoU domain; sequence EPRSDVERDF…EDGIIKTCYP (142 aa). Residues histidine 6214, histidine 6229, lysine 6269, lysine 6373, aspartate 6457, lysine 6501, and glutamate 6534 contribute to the active site. The Nidovirus-type SAM-dependent 2'-O-MTase domain maps to 6329–6628; it reads QSAWTCGYNM…NTSFTSDSFV (300 aa).

It belongs to the coronaviruses polyprotein 1ab family. As to quaternary structure, interacts with host PHB and PHB2. Interacts with papain-like protease and non-structural protein 6. In terms of assembly, monomer. Homodimer. Only the homodimer shows catalytic activity. As to quaternary structure, eight copies of nsp7 and eight copies of nsp8 assemble to form a heterohexadecamer dsRNA-encircling ring structure. Eight copies of nsp7 and eight copies of nsp8 assemble to form a heterohexadecamer dsRNA-encircling ring structure. Interacts with ORF6 protein. In terms of assembly, homodimer. As to quaternary structure, homododecamer. Interacts with proofreading exoribonuclease nsp14 and 2'-O-methyltransferase nsp16; these interactions enhance nsp14 and nsp16 enzymatic activities. Interacts with host DDX1 (via C-terminus). Interacts with non-structural protein 10. In terms of assembly, homohexamer. As to quaternary structure, interacts with non-structural protein 10. Mn(2+) is required as a cofactor. Zn(2+) serves as cofactor. Specific enzymatic cleavages in vivo by its own proteases yield mature proteins. 3C-like proteinase nsp5 liberates nsps 6-16 from the polyprotein. Papain-like and 3C-like proteinases are autocatalytically processed. Post-translationally, N-glycosylated.

It is found in the host endoplasmic reticulum membrane. The protein localises to the host cytoplasm. Its subcellular location is the host perinuclear region. The protein resides in the host endoplasmic reticulum. It localises to the host endoplasmic reticulum-Golgi intermediate compartment. The catalysed reaction is Thiol-dependent hydrolysis of ester, thioester, amide, peptide and isopeptide bonds formed by the C-terminal Gly of ubiquitin (a 76-residue protein attached to proteins as an intracellular targeting signal).. The enzyme catalyses RNA(n) + a ribonucleoside 5'-triphosphate = RNA(n+1) + diphosphate. It catalyses the reaction ATP + H2O = ADP + phosphate + H(+). It carries out the reaction a 5'-end diphospho-ribonucleoside in mRNA + GTP + H(+) = a 5'-end (5'-triphosphoguanosine)-ribonucleoside in mRNA + diphosphate. The catalysed reaction is uridylyl-uridylyl-ribonucleotide-RNA = a 3'-end uridylyl-2',3'-cyclophospho-uridine-RNA + a 5'-end dephospho-ribonucleoside-RNA. The enzyme catalyses a 5'-end (N(7)-methyl 5'-triphosphoguanosine)-ribonucleoside in mRNA + S-adenosyl-L-methionine = a 5'-end (N(7)-methyl 5'-triphosphoguanosine)-(2'-O-methyl-ribonucleoside) in mRNA + S-adenosyl-L-homocysteine + H(+). Multifunctional protein involved in the transcription and replication of viral RNAs. Contains the proteinases responsible for the cleavages of the polyprotein. In terms of biological role, may play a role in the modulation of host cell survival signaling pathway by interacting with host PHB and PHB2. Indeed, these two proteins play a role in maintaining the functional integrity of the mitochondria and protecting cells from various stresses. Its function is as follows. Responsible for the cleavages located at the N-terminus of the replicase polyprotein. In addition, PL-PRO possesses a deubiquitinating/deISGylating activity and processes both 'Lys-48'- and 'Lys-63'-linked polyubiquitin chains from cellular substrates. Functionally, plays a role in host membrane rearrangement that leads to creation of cytoplasmic double-membrane vesicles (DMV) necessary for viral replication. Alone is able to induce paired membranes. Coexpression of nsp3 and nsp4 does not result in the formation of DMVs. Responsible for the majority of cleavages as it cleaves the C-terminus of replicase polyprotein at 11 sites. Recognizes substrates containing the core sequence [ILMVF]-Q-|-[SGACN]. Inhibited by the substrate-analog Cbz-Val-Asn-Ser-Thr-Leu-Gln-CMK. In terms of biological role, forms a hexadecamer with nsp8 (8 subunits of each) that may participate in viral replication by acting as a primase. Alternatively, may synthesize substantially longer products than oligonucleotide primers. Its function is as follows. Forms a hexadecamer with nsp7 (8 subunits of each) that may participate in viral replication by acting as a primase. Alternatively, may synthesize substantially longer products than oligonucleotide primers. Functionally, forms a primer, NSP9-pU, which is utilized by the polymerase for the initiation of RNA chains. Interacts with ribosome signal recognition particle RNA (SRP). Together with NSP8, suppress protein integration into the cell membrane, thereby disrupting host immune defenses. Plays a pivotal role in viral transcription by stimulating both nsp14 3'-5' exoribonuclease and nsp16 2'-O-methyltransferase activities. Therefore plays an essential role in viral mRNAs cap methylation. In terms of biological role, RNA-directed RNA polymerase that catalyzes the transcription of viral genomic and subgenomic RNAs. Acts in complex with nsp7 and nsp8 to transcribe both the minus and positive strands of genomic RNA. The kinase-like NiRAN domain of NSP12 attaches one or more nucleotides to the amino terminus of NSP9, forming a covalent RNA-protein intermediate that serves as transcription/replication primer. Subgenomic RNAs (sgRNAs) are formed by discontinuous transcription: The polymerase has the ability to pause at transcription-regulating sequences (TRS) and jump to the leader TRS, resulting in a major deletion. This creates a series of subgenomic RNAs that are replicated, transcribed and translated. In addition, Nsp12 is a subunit of the viral RNA capping enzyme that catalyzes the RNA guanylyltransferase reaction for genomic and sub-genomic RNAs. Subsequently, the NiRAN domain transfers RNA to GDP, and forms the core cap structure GpppA-RNA. Its function is as follows. Multi-functional protein with a zinc-binding domain in N-terminus displaying RNA and DNA duplex-unwinding activities with 5' to 3' polarity. Activity of helicase is dependent on magnesium. Functionally, enzyme possessing two different activities: an exoribonuclease activity acting on both ssRNA and dsRNA in a 3' to 5' direction and a N7-guanine methyltransferase activity. Acts as a proofreading exoribonuclease for RNA replication, thereby lowering The sensitivity of the virus to RNA mutagens. Plays a role in viral transcription/replication and prevents the simultaneous activation of host cell dsRNA sensors, such as MDA5/IFIH1, OAS, and PKR. Acts by degrading the 5'-polyuridines generated during replication of the poly(A) region of viral genomic and subgenomic RNAs. Catalyzes a two-step reaction in which a 2'3'-cyclic phosphate (2'3'-cP) is first generated by 2'-O transesterification, which is then hydrolyzed to a 3'-phosphate (3'-P). If not degraded, poly(U) RNA would hybridize with poly(A) RNA tails and activate host dsRNA sensors. In terms of biological role, methyltransferase that mediates mRNA cap 2'-O-ribose methylation to the 5'-cap structure of viral mRNAs. N7-methyl guanosine cap is a prerequisite for binding of nsp16. Therefore plays an essential role in viral mRNAs cap methylation which is essential to evade immune system. The polypeptide is Replicase polyprotein 1ab (rep) (Gallus gallus (Chicken)).